Consider the following 390-residue polypeptide: Phosphopentomutase (390 aa).

Asp10, Asp284, His289, Asp325, His326, and His337 together coordinate Mn(2+).

Belongs to the phosphopentomutase family. Mn(2+) is required as a cofactor.

The protein resides in the cytoplasm. It carries out the reaction 2-deoxy-alpha-D-ribose 1-phosphate = 2-deoxy-D-ribose 5-phosphate. The catalysed reaction is alpha-D-ribose 1-phosphate = D-ribose 5-phosphate. It participates in carbohydrate degradation; 2-deoxy-D-ribose 1-phosphate degradation; D-glyceraldehyde 3-phosphate and acetaldehyde from 2-deoxy-alpha-D-ribose 1-phosphate: step 1/2. In terms of biological role, isomerase that catalyzes the conversion of deoxy-ribose 1-phosphate (dRib-1-P) and ribose 1-phosphate (Rib-1-P) to deoxy-ribose 5-phosphate (dRib-5-P) and ribose 5-phosphate (Rib-5-P), respectively. The sequence is that of Phosphopentomutase from Clostridioides difficile (strain 630) (Peptoclostridium difficile).